The following is an 81-amino-acid chain: ATP synthase subunit c, chloroplastic (81 aa).

Transmembrane regions (helical) follow at residues 3–23 (PLIS…ASIG) and 57–77 (LAFM…LLFA).

This sequence belongs to the ATPase C chain family. F-type ATPases have 2 components, F(1) - the catalytic core - and F(0) - the membrane proton channel. F(1) has five subunits: alpha(3), beta(3), gamma(1), delta(1), epsilon(1). F(0) has four main subunits: a(1), b(1), b'(1) and c(10-14). The alpha and beta chains form an alternating ring which encloses part of the gamma chain. F(1) is attached to F(0) by a central stalk formed by the gamma and epsilon chains, while a peripheral stalk is formed by the delta, b and b' chains.

The protein localises to the plastid. Its subcellular location is the chloroplast thylakoid membrane. Functionally, f(1)F(0) ATP synthase produces ATP from ADP in the presence of a proton or sodium gradient. F-type ATPases consist of two structural domains, F(1) containing the extramembraneous catalytic core and F(0) containing the membrane proton channel, linked together by a central stalk and a peripheral stalk. During catalysis, ATP synthesis in the catalytic domain of F(1) is coupled via a rotary mechanism of the central stalk subunits to proton translocation. Its function is as follows. Key component of the F(0) channel; it plays a direct role in translocation across the membrane. A homomeric c-ring of between 10-14 subunits forms the central stalk rotor element with the F(1) delta and epsilon subunits. The protein is ATP synthase subunit c, chloroplastic of Acorus calamus var. americanus (American sweet flag).